Reading from the N-terminus, the 305-residue chain is Small ribosomal subunit protein bS1B (305 aa).

S1 motif domains follow at residues 29–98 (GQTV…LSRR), 116–180 (GKTL…LTQR), and 194–262 (GNIY…LSTR).

Belongs to the bacterial ribosomal protein bS1 family.

Functionally, binds mRNA. In Synechocystis sp. (strain ATCC 27184 / PCC 6803 / Kazusa), this protein is Small ribosomal subunit protein bS1B (rps1b).